The following is a 120-amino-acid chain: NAD(P)H-quinone oxidoreductase subunit 3, chloroplastic (120 aa).

3 helical membrane passes run 9 to 29, 64 to 84, and 88 to 108; these read IFWAFLIISSAIPFLAFLISG, MFALVFVVFDVETVFLYPWAM, and VLGVSAFIEAFVFVLILILGL.

This sequence belongs to the complex I subunit 3 family. As to quaternary structure, NDH is composed of at least 16 different subunits, 5 of which are encoded in the nucleus.

It localises to the plastid. It is found in the chloroplast thylakoid membrane. It catalyses the reaction a plastoquinone + NADH + (n+1) H(+)(in) = a plastoquinol + NAD(+) + n H(+)(out). The enzyme catalyses a plastoquinone + NADPH + (n+1) H(+)(in) = a plastoquinol + NADP(+) + n H(+)(out). Its function is as follows. NDH shuttles electrons from NAD(P)H:plastoquinone, via FMN and iron-sulfur (Fe-S) centers, to quinones in the photosynthetic chain and possibly in a chloroplast respiratory chain. The immediate electron acceptor for the enzyme in this species is believed to be plastoquinone. Couples the redox reaction to proton translocation, and thus conserves the redox energy in a proton gradient. This Aethionema grandiflorum (Persian stone-cress) protein is NAD(P)H-quinone oxidoreductase subunit 3, chloroplastic.